Consider the following 463-residue polypeptide: Probable ECA polymerase (463 aa).

The next 11 membrane-spanning stretches (helical) occupy residues 6–26, 39–59, 65–85, 112–132, 154–174, 180–200, 201–221, 222–242, 340–360, 377–397, and 408–428; these read FGGL…LTWM, FSLL…VLVF, VVPV…YAIY, ANLT…IFFL, GVAL…VYFL, AWLM…VIVG, GTRA…IVRG, WITL…MFWL, LVVM…GLVI, YKAA…IVLT, and VVFF…LYWL.

This sequence belongs to the WzyE family. In terms of assembly, probably part of a complex composed of WzxE, WzyE and WzzE.

It is found in the cell inner membrane. It participates in bacterial outer membrane biogenesis; enterobacterial common antigen biosynthesis. In terms of biological role, probably involved in the polymerization of enterobacterial common antigen (ECA) trisaccharide repeat units. This chain is Probable ECA polymerase, found in Pectobacterium carotovorum subsp. carotovorum (strain PC1).